A 331-amino-acid chain; its full sequence is Flotillin-like protein FloA (331 aa).

2 helical membrane-spanning segments follow: residues 6–26 and 28–48; these read LMIL…FTFV and VMLW…TLVG. Residues 236-331 form a required for correct localization region; sequence QTDQAEADKN…KDPSDEDRKS (96 aa). 4 short sequence motifs (EA repeat) span residues 240-242, 251-253, 278-282, and 288-290; these read AEA, AEE, and EAEAE. Residues 312-331 form a disordered region; sequence EMRDSFGKLTKDPSDEDRKS.

It belongs to the flotillin-like FloA family. As to quaternary structure, homooligomerizes. Interacts with FloT. Interacts with FtsH midcell. Interacts with PhoR, colocalizes with PhoR in FloA-only membrane rafts.

It localises to the cell membrane. The protein localises to the membrane raft. Its function is as follows. Found in functional membrane microdomains (FMM) that may be equivalent to eukaryotic membrane rafts. FMMs are highly dynamic and increase in number as cells age. FloA and FloT function is partially redundant; double deletions have marked synthetic phenotypes. Flotillins are thought to be important factors in membrane fluidity, especially during periods of rapid growth in rich media. Whether specific proteins are associated with FMMs is controversial; in one study FloT rafts have been shown to include proteins involved in adaptation to stationary phase, while FloA-FloT rafts include proteins involved in differentiation including sporulation, biofilm formation and DNA uptake competence. Another (more finely resolved) study only showed association of NfeD2 with FloT rafts of all the proteins examined. Involved in spatial organization of membranes, perhaps recruiting proteins to specific membrane regions. Simultaneous overexpression of both FloA and FloT leads to defects in cell division and differentiation, in part caused by stabilization of FtsH and its subsequent increased ability to degrade proteins. Cells make more biofilm, are about half as long, have less EzrA and more frequent Z-rings. The sequence is that of Flotillin-like protein FloA from Bacillus subtilis (strain 168).